An 862-amino-acid chain; its full sequence is Ubiquitin carboxyl-terminal hydrolase 13 (862 aa).

The segment at 182–290 (QASKHAKSLV…KHLAHFGIDM (109 aa)) adopts a UBP-type; degenerate zinc-finger fold. Residues cysteine 206, cysteine 209, cysteine 226, and histidine 239 each contribute to the Zn(2+) site. The USP domain occupies 331–860 (TGMKNLGNSC…LGYIYFYHRI (530 aa)). Cysteine 340 (nucleophile) is an active-site residue. UBA domains lie at 647-688 (DIDE…IIAH) and 722-762 (QPPE…IFSH). The active-site Proton acceptor is the histidine 822.

It belongs to the peptidase C19 family.

The enzyme catalyses Thiol-dependent hydrolysis of ester, thioester, amide, peptide and isopeptide bonds formed by the C-terminal Gly of ubiquitin (a 76-residue protein attached to proteins as an intracellular targeting signal).. With respect to regulation, specifically inhibited by spautin-1 (specific and potent autophagy inhibitor-1), a derivative of MBCQ that binds to USP13 and inhibits deubiquitinase activity. In terms of biological role, deubiquitinase that mediates deubiquitination of target proteins and is involved in various processes such as autophagy and endoplasmic reticulum-associated degradation (ERAD). In Gallus gallus (Chicken), this protein is Ubiquitin carboxyl-terminal hydrolase 13 (USP13).